Here is a 464-residue protein sequence, read N- to C-terminus: MEEHYYVSIDIGSSSVKTIVGEKFHNGINVIGTGQTYTSGIKNGLIDDFDIARQAIKDTIKKASIASGVDIKDVFLKLPIIGTEVYDESNEIEFYEDTEIDGTHIESVLEGIRDKNDVPETEVINVFPIRFVVDKDNEVSDPKELIARHSLKVDAGVIAIQKSILINMIKCVEACGVDVLDVYSDAYNYGFILTPTEKELGACVIDIGEDLTQVAFYERGELVDAESIEMAGRDITDDIAQGLNTTYDTAEKVKHQYGHAFYDSASDQDVFSVDQVDSDEHVQYTQKDLSDFIEQRVEDIFFEVFDVLQELGLTKVNGGFVVTGGSANLLGVKELLQDMVSEKVRIHTPSQMGIRKPEFSSAISTISSSIAFDELLDYVTISYQDNEEFEEEVIETDKDTETKSSGFDWFKRKSNKKENDEVAPEAPREESYEDRENHLEDEQQTEGKAKEESKFKKLMKSLFE.

The interval 392-464 (EVIETDKDTE…FKKLMKSLFE (73 aa)) is disordered. The segment covering 416 to 455 (KKENDEVAPEAPREESYEDRENHLEDEQQTEGKAKEESKF) has biased composition (basic and acidic residues).

This sequence belongs to the FtsA/MreB family. Self-interacts. Interacts with FtsZ.

Its subcellular location is the cell membrane. In terms of biological role, cell division protein that is involved in the assembly of the Z ring. May serve as a membrane anchor for the Z ring. The protein is Cell division protein FtsA of Staphylococcus epidermidis (strain ATCC 12228 / FDA PCI 1200).